The primary structure comprises 921 residues: uncharacterized protein (921 aa).

The kinase-like stretch occupies residues methionine 334–phenylalanine 628. The span at glycine 401–glycine 494 shows a compositional bias: low complexity. Disordered stretches follow at residues glycine 401 to asparagine 499 and asparagine 664 to serine 711.

This is an uncharacterized protein from Dictyostelium discoideum (Social amoeba).